The following is a 682-amino-acid chain: Connectin (682 aa).

The first 24 residues, Met1–Val24, serve as a signal peptide directing secretion. The interval Gly29–Ser54 is disordered. Positions Arg40 to Ser54 are enriched in low complexity. 11 LRR repeats span residues Leu149–Pro172, Leu173–Asn196, Phe199–Asn220, Arg223–Asn244, Leu247–Asp268, Arg271–Gly292, Asn295–Glu316, Ser319–Asn342, Thr343–Gly364, Ala367–Pro388, and Ile389–Asp404. The LRRCT domain occupies Asn405–Gly462. Residues Arg503–Glu536 are disordered. Residue Ala658 is the site of GPI-anchor amidated alanine attachment. Residues Gly659 to Gly682 constitute a propeptide, removed in mature form.

In terms of tissue distribution, predominantly expressed in abdominal and thoracic segment muscle and motorneuron cells.

The protein resides in the cell membrane. Cell adhesion protein involved in target recognition during neuromuscular development. Mediates homophilic cellular adhesion. This Drosophila melanogaster (Fruit fly) protein is Connectin (Con).